A 298-amino-acid chain; its full sequence is Inosose dehydratase (298 aa).

Belongs to the IolE/MocC family. Glutathione is required as a cofactor. The cofactor is Co(2+). It depends on Mn(2+) as a cofactor.

The enzyme catalyses scyllo-inosose = 3D-3,5/4-trihydroxycyclohexane-1,2-dione + H2O. In terms of biological role, catalyzes the dehydration of inosose (2-keto-myo-inositol, 2KMI or 2,4,6/3,5-pentahydroxycyclohexanone) to 3D-(3,5/4)-trihydroxycyclohexane-1,2-dione (D-2,3-diketo-4-deoxy-epi-inositol). This Yersinia enterocolitica serotype O:8 / biotype 1B (strain NCTC 13174 / 8081) protein is Inosose dehydratase.